Consider the following 598-residue polypeptide: Leucine aminopeptidase 2, chloroplastic (598 aa).

Residues 1-71 (MATAASTSAA…GHRARMGHTA (71 aa)) constitute a chloroplast transit peptide. Residues Lys-367 and Asp-372 each contribute to the Mn(2+) site. Residue Lys-379 is part of the active site. The Mn(2+) site is built by Asp-392, Asp-452, and Glu-454. Arg-456 is a catalytic residue.

The protein belongs to the peptidase M17 family. As to quaternary structure, homohexamer (dimer of homotrimers). Mn(2+) serves as cofactor.

It is found in the plastid. The protein resides in the chloroplast. The enzyme catalyses Release of an N-terminal amino acid, Xaa-|-Yaa-, in which Xaa is preferably Leu, but may be other amino acids including Pro although not Arg or Lys, and Yaa may be Pro. Amino acid amides and methyl esters are also readily hydrolyzed, but rates on arylamides are exceedingly low.. It catalyses the reaction Release of N-terminal proline from a peptide.. Its function is as follows. Presumably involved in the processing and regular turnover of intracellular proteins. Catalyzes the removal of unsubstituted N-terminal amino acids from various peptides. In Oryza sativa subsp. japonica (Rice), this protein is Leucine aminopeptidase 2, chloroplastic.